The sequence spans 91 residues: Putative defensin-like protein 145 (91 aa).

Residues 1–26 (MNKNIIFSFTVLTLFVIFVQVTGVIG) form the signal peptide. N-linked (GlcNAc...) asparagine glycans are attached at residues Asn-35 and Asn-68. 4 disulfide bridges follow: Cys-39/Cys-84, Cys-52/Cys-74, Cys-57/Cys-78, and Cys-61/Cys-80.

It belongs to the DEFL family.

Its subcellular location is the secreted. The sequence is that of Putative defensin-like protein 145 (LCR2) from Arabidopsis thaliana (Mouse-ear cress).